The sequence spans 217 residues: Pyrophosphatase PpaX (217 aa).

The active-site Nucleophile is Asp11.

The protein belongs to the HAD-like hydrolase superfamily. PpaX family. Requires Mg(2+) as cofactor.

The catalysed reaction is diphosphate + H2O = 2 phosphate + H(+). Its function is as follows. Hydrolyzes pyrophosphate formed during P-Ser-HPr dephosphorylation by HPrK/P. Might play a role in controlling the intracellular pyrophosphate pool. This Listeria innocua serovar 6a (strain ATCC BAA-680 / CLIP 11262) protein is Pyrophosphatase PpaX.